The sequence spans 651 residues: MGLSTYVGIFLLCILTLSRCKSGKEEYGTVIGIDLGTTYSCVGVFKNGRVEIIANDQGNRITPSYVAFSGDGERLIGDAAKNQLTSNPKNTLFDAKRLIGRDYHDKDVQGDIKRYPFKVINKNNKPYMKVQVGSEEKGFAPEEVSAMVLSKMKEIAEAYLGTEVTHAVVTVPAYFNDAQRQATKDAGAIAGLTVLRIINEPTAAAIAYGLEKKDTEKNILVFDLGGGTFDVSLLTIDNGVFEVVATSGDTHLGGEDFDQRLIDYFVKLYKKKEGKDITKDDRAVQKLRREVEKAKRTLSTEHSTMIEIDNLFEGKDFSEPLTRARFEELNNDLFRSTLKPVMKVMEDSGLKKEDIDDIVLVGGSTRIPKIQQLVKEFFNGKEPIRGINPDEAVAYGAAVQAGVISGVEDTGDIVLLDVCPLTMGIETVGGVMTKLIPRNTVIPTKKSQIFSTAADNQPTVTIQVFEGERPMTKDNHFLGKFDLTGIPPAPRGLPQIEVTFEIDVNGILRVSAEDKGTGKKSNIVINKETNRITPEEIERMIQDAEKFSDQDKQVKERVEVRNDLESLAYSIKNQVKDKEKMGGKLSDDEIKTIEDAADEAIKWMENNPQAETSDYKKQKANLESVVQPIVSKLYEGAAPPPPTESTPKEEL.

Residues 1–20 (MGLSTYVGIFLLCILTLSRC) form the signal peptide. ATP contacts are provided by residues 36–39 (GTTY), Lys-96, 226–228 (GGT), 292–299 (EKAKRTLS), and 363–366 (GSTR). The segment at 125–279 (KPYMKVQVGS…KKKEGKDITK (155 aa)) is nucleotide-binding (NBD). A substrate-binding (SBD) region spans residues 399–499 (VQAGVISGVE…PRGLPQIEVT (101 aa)). A Prevents secretion from ER motif is present at residues 648 to 651 (KEEL).

Belongs to the heat shock protein 70 family.

It is found in the endoplasmic reticulum lumen. It carries out the reaction ATP + H2O = ADP + phosphate + H(+). With respect to regulation, the chaperone activity is regulated by ATP-induced allosteric coupling of the nucleotide-binding (NBD) and substrate-binding (SBD) domains. In the ADP-bound and nucleotide-free (apo) states, the two domains have little interaction. In contrast, in the ATP-bound state the two domains are tightly coupled, which results in drastically accelerated kinetics in both binding and release of polypeptide substrates. J domain-containing co-chaperones stimulate the ATPase activity and are required for efficient substrate recognition. Its function is as follows. Endoplasmic reticulum chaperone that plays a key role in protein folding and quality control in the endoplasmic reticulum lumen. Involved in the correct folding of proteins and degradation of misfolded proteins. Acts as a key repressor of the unfolded protein response (UPR). In Echinococcus granulosus (Hydatid tapeworm), this protein is Endoplasmic reticulum chaperone BiP.